The chain runs to 94 residues: Co-chaperonin GroES (94 aa).

This sequence belongs to the GroES chaperonin family. As to quaternary structure, heptamer of 7 subunits arranged in a ring. Interacts with the chaperonin GroEL.

Its subcellular location is the cytoplasm. In terms of biological role, together with the chaperonin GroEL, plays an essential role in assisting protein folding. The GroEL-GroES system forms a nano-cage that allows encapsulation of the non-native substrate proteins and provides a physical environment optimized to promote and accelerate protein folding. GroES binds to the apical surface of the GroEL ring, thereby capping the opening of the GroEL channel. This is Co-chaperonin GroES from Ligilactobacillus salivarius (strain UCC118) (Lactobacillus salivarius).